The primary structure comprises 873 residues: DNA helicase/primase complex-associated protein (873 aa).

The disordered stretch occupies residues 394-422 (PPLPRDDGDGENNVVEVSSSTGGAHPPSD).

Belongs to the herpesviridae HEPA family. As to quaternary structure, associates with the primase and the helicase to form the helicase-primase complex. Interacts with the origin-binding protein. Interacts with the polymerase catalytic subunit.

It is found in the host nucleus. Its function is as follows. Component of the helicase/primase complex. Unwinds the DNA at the replication forks and generates single-stranded DNA for both leading and lagging strand synthesis. The primase synthesizes short RNA primers on the lagging strand that the polymerase presumably elongates using dNTPs. The primase-associated factor has no known catalytic activity in the complex and may serve to facilitate the formation of the replisome by directly interacting with the origin-binding protein and the polymerase. The chain is DNA helicase/primase complex-associated protein (UL102) from Human cytomegalovirus (strain Merlin) (HHV-5).